The chain runs to 177 residues: Interleukin-1 receptor antagonist protein (177 aa).

Residues 1-25 form the signal peptide; the sequence is MEVCRCHHGYLISLLLFLFHSETAC. A disulfide bridge links cysteine 91 with cysteine 141. 2 N-linked (GlcNAc...) asparagine glycosylation sites follow: asparagine 109 and asparagine 114.

This sequence belongs to the IL-1 family.

Its subcellular location is the secreted. Its function is as follows. Anti-inflammatory antagonist of interleukin-1 family of proinflammatory cytokines such as interleukin-1beta/IL1B and interleukin-1alpha/IL1A. Protects from immune dysregulation and uncontrolled systemic inflammation triggered by IL1 for a range of innate stimulatory agents such as pathogens. The chain is Interleukin-1 receptor antagonist protein (IL1RN) from Tursiops truncatus (Atlantic bottle-nosed dolphin).